A 231-amino-acid chain; its full sequence is Octanoyltransferase (231 aa).

In terms of domain architecture, BPL/LPL catalytic spans 49–231 (SEAAEQVWLL…KRTFSEVFGS (183 aa)). Substrate is bound by residues 87 to 94 (RGGQITYH), 162 to 164 (AIG), and 175 to 177 (GVS). C193 functions as the Acyl-thioester intermediate in the catalytic mechanism.

Belongs to the LipB family.

It localises to the cytoplasm. The catalysed reaction is octanoyl-[ACP] + L-lysyl-[protein] = N(6)-octanoyl-L-lysyl-[protein] + holo-[ACP] + H(+). It functions in the pathway protein modification; protein lipoylation via endogenous pathway; protein N(6)-(lipoyl)lysine from octanoyl-[acyl-carrier-protein]: step 1/2. In terms of biological role, catalyzes the transfer of endogenously produced octanoic acid from octanoyl-acyl-carrier-protein onto the lipoyl domains of lipoate-dependent enzymes. Lipoyl-ACP can also act as a substrate although octanoyl-ACP is likely to be the physiological substrate. This is Octanoyltransferase from Nitrobacter winogradskyi (strain ATCC 25391 / DSM 10237 / CIP 104748 / NCIMB 11846 / Nb-255).